The primary structure comprises 349 residues: Putative phytanoyl-CoA dioxygenase (349 aa).

Residues K118 and 169-171 each bind 2-oxoglutarate; that span reads HLD. Residues H169 and D171 each contribute to the Fe cation site.

This sequence belongs to the PhyH family. Requires Fe cation as cofactor. L-ascorbate serves as cofactor.

The catalysed reaction is phytanoyl-CoA + 2-oxoglutarate + O2 = 2-hydroxyphytanoyl-CoA + succinate + CO2. Its pathway is lipid metabolism; fatty acid metabolism. In terms of biological role, converts phytanoyl-CoA to 2-hydroxyphytanoyl-CoA. The sequence is that of Putative phytanoyl-CoA dioxygenase from Dictyostelium discoideum (Social amoeba).